Reading from the N-terminus, the 373-residue chain is S-adenosylmethionine:tRNA ribosyltransferase-isomerase (373 aa).

It belongs to the QueA family. Monomer.

It localises to the cytoplasm. The enzyme catalyses 7-aminomethyl-7-carbaguanosine(34) in tRNA + S-adenosyl-L-methionine = epoxyqueuosine(34) in tRNA + adenine + L-methionine + 2 H(+). Its pathway is tRNA modification; tRNA-queuosine biosynthesis. Functionally, transfers and isomerizes the ribose moiety from AdoMet to the 7-aminomethyl group of 7-deazaguanine (preQ1-tRNA) to give epoxyqueuosine (oQ-tRNA). The sequence is that of S-adenosylmethionine:tRNA ribosyltransferase-isomerase from Rhizobium etli (strain CIAT 652).